The sequence spans 1088 residues: RNA-directed RNA polymerase (1088 aa).

The region spanning 501–687 (LSYGDVTRFL…AKRYIAGGKI (187 aa)) is the RdRp catalytic domain.

Belongs to the reoviridae RNA-directed RNA polymerase family. In terms of assembly, interacts with VP3 (Potential). Interacts with VP2; this interaction activates VP1. Interacts with NSP5; this interaction is probably necessary for the formation of functional virus factories. Interacts with NSP2; this interaction is weak. It depends on Mg(2+) as a cofactor.

The protein resides in the virion. The enzyme catalyses RNA(n) + a ribonucleoside 5'-triphosphate = RNA(n+1) + diphosphate. In terms of biological role, RNA-directed RNA polymerase that is involved in both transcription and genome replication. Together with VP3 capping enzyme, forms an enzyme complex positioned near the channels situated at each of the five-fold vertices of the core. Following infection, the outermost layer of the virus is lost, leaving a double-layered particle (DLP) made up of the core and VP6 shell. VP1 then catalyzes the transcription of fully conservative plus-strand genomic RNAs that are extruded through the DLP's channels into the cytoplasm where they function as mRNAs for translation of viral proteins. One copy of each of the viral (+)RNAs is also recruited during core assembly, together with newly synthesized polymerase complexes and VP2. The polymerase of these novo-formed particles catalyzes the synthesis of complementary minus-strands leading to dsRNA formation. To do so, the polymerase specifically recognizes and binds 4 bases 5'-UGUG-3' in the conserved 3'-sequence of plus-strand RNA templates. VP2 presumably activates the autoinhibited VP1-RNA complex to coordinate packaging and genome replication. Once dsRNA synthesis is complete, the polymerase switches to the transcriptional mode, thus providing secondary transcription. The chain is RNA-directed RNA polymerase from Rotavirus A (strain RVA/Cow/United States/NCDV-Lincoln/1969/G6P6[1]) (RV-A).